Here is a 219-residue protein sequence, read N- to C-terminus: Orotate phosphoribosyltransferase (219 aa).

5-phospho-alpha-D-ribose 1-diphosphate is bound at residue lysine 26. 34 to 35 (FF) lines the orotate pocket. 5-phospho-alpha-D-ribose 1-diphosphate contacts are provided by residues 72 to 73 (YK), arginine 98, lysine 99, lysine 102, histidine 104, and 124 to 132 (DDVITAGTA). 2 residues coordinate orotate: threonine 128 and arginine 156.

The protein belongs to the purine/pyrimidine phosphoribosyltransferase family. PyrE subfamily. As to quaternary structure, homodimer. Mg(2+) serves as cofactor.

It carries out the reaction orotidine 5'-phosphate + diphosphate = orotate + 5-phospho-alpha-D-ribose 1-diphosphate. Its pathway is pyrimidine metabolism; UMP biosynthesis via de novo pathway; UMP from orotate: step 1/2. Functionally, catalyzes the transfer of a ribosyl phosphate group from 5-phosphoribose 1-diphosphate to orotate, leading to the formation of orotidine monophosphate (OMP). The polypeptide is Orotate phosphoribosyltransferase (Xanthomonas axonopodis pv. citri (strain 306)).